We begin with the raw amino-acid sequence, 242 residues long: Anti-Pycsar protein Apyc1 (242 aa).

The interval Phe-17–His-216 is beta-lactamase-like. Zn(2+) is bound by residues His-59, His-61, Asp-63, His-64, His-142, Asp-162, and His-216.

Belongs to the anti-Pycsar protein Apyc1 family. Homodimer. It depends on Zn(2+) as a cofactor.

It carries out the reaction 3',5'-cyclic CMP + H2O = CMP + H(+). The catalysed reaction is 3',5'-cyclic UMP + H2O = UMP + H(+). Functionally, counteracts the endogenous Pycsar antiviral defense system. Phosphodiesterase that enables metal-dependent hydrolysis of host cyclic nucleotide Pycsar defense signals such as cCMP and cUMP. The sequence is that of Anti-Pycsar protein Apyc1 from Saccharibacillus brassicae.